The sequence spans 363 residues: Dihydroorotate dehydrogenase (quinone) (363 aa).

Residues 70-74 (AGFDK) and threonine 94 each bind FMN. Residue lysine 74 participates in substrate binding. Residue 119–123 (NRMGF) participates in substrate binding. Asparagine 147 and asparagine 180 together coordinate FMN. Residue asparagine 180 participates in substrate binding. Serine 183 (nucleophile) is an active-site residue. Asparagine 185 contributes to the substrate binding site. 2 residues coordinate FMN: lysine 216 and threonine 244. Residue 245–246 (NT) participates in substrate binding. FMN-binding positions include glycine 270, glycine 299, and 320–321 (YT).

Belongs to the dihydroorotate dehydrogenase family. Type 2 subfamily. In terms of assembly, monomer. FMN serves as cofactor.

It localises to the cell membrane. The enzyme catalyses (S)-dihydroorotate + a quinone = orotate + a quinol. It participates in pyrimidine metabolism; UMP biosynthesis via de novo pathway; orotate from (S)-dihydroorotate (quinone route): step 1/1. Its function is as follows. Catalyzes the conversion of dihydroorotate to orotate with quinone as electron acceptor. This is Dihydroorotate dehydrogenase (quinone) from Corynebacterium diphtheriae (strain ATCC 700971 / NCTC 13129 / Biotype gravis).